Reading from the N-terminus, the 555-residue chain is Glutamine--tRNA ligase (555 aa).

The short motif at 34-44 (PEPNGYLHIGH) is the 'HIGH' region element. Residues 35 to 37 (EPN) and 41 to 47 (HIGHAKS) contribute to the ATP site. L-glutamine contacts are provided by Asp67 and Tyr212. ATP-binding positions include Thr231, 261–262 (RL), and 269–271 (MSK). A 'KMSKS' region motif is present at residues 268–272 (VMSKR). Residues 317–324 (TKQDNTIE) form an interaction with tRNA region.

This sequence belongs to the class-I aminoacyl-tRNA synthetase family. As to quaternary structure, monomer.

It is found in the cytoplasm. It catalyses the reaction tRNA(Gln) + L-glutamine + ATP = L-glutaminyl-tRNA(Gln) + AMP + diphosphate. In Salmonella agona (strain SL483), this protein is Glutamine--tRNA ligase.